We begin with the raw amino-acid sequence, 141 residues long: DUF35 domain-containing scaffold protein (141 aa).

The Zn(2+) site is built by cysteine 30, cysteine 33, cysteine 44, and cysteine 47.

The protein belongs to the scaffold protein DUF35 family. In terms of assembly, interacts with acetoacetyl-CoA thiolase and HMG-CoA synthase (HMGCS) that catalyzes the first and second step in the mevalonate pathway, respectively.

Functionally, functions as a scaffold to connect the acetoacetyl-CoA thiolase and HMG-CoA synthase (HMGCS) dimers in the channeling thiolase/HMGCS complex, which allows for efficient coupling of the endergonic thiolase reaction with the exergonic HMGCS reaction. This chain is DUF35 domain-containing scaffold protein, found in Methanocaldococcus jannaschii (strain ATCC 43067 / DSM 2661 / JAL-1 / JCM 10045 / NBRC 100440) (Methanococcus jannaschii).